The chain runs to 325 residues: Nod factor export ATP-binding protein I (325 aa).

An ABC transporter domain is found at 27–257 (LELRKVRKQY…QIGCDVVEVY (231 aa)). 59-66 (GPNGAGKT) is a binding site for ATP.

It belongs to the ABC transporter superfamily. Lipooligosaccharide exporter (TC 3.A.1.102) family. In terms of assembly, the complex is composed of two ATP-binding proteins (NodI) and two transmembrane proteins (NodJ).

Its subcellular location is the cell inner membrane. Part of the ABC transporter complex NodIJ involved in the export of the nodulation factors (Nod factors), the bacterial signal molecules that induce symbiosis and subsequent nodulation induction. Nod factors are LCO (lipo-chitin oligosaccharide), a modified beta-1,4-linked N-acetylglucosamine oligosaccharide. This subunit is responsible for energy coupling to the transport system. The chain is Nod factor export ATP-binding protein I from Cupriavidus pinatubonensis (strain JMP 134 / LMG 1197) (Cupriavidus necator (strain JMP 134)).